The chain runs to 275 residues: 4-hydroxy-tetrahydrodipicolinate reductase (275 aa).

NAD(+)-binding positions include 13–18 and 108–110; these read GAAGKM and GTT. His-164 (proton donor/acceptor) is an active-site residue. His-165 contacts (S)-2,3,4,5-tetrahydrodipicolinate. The active-site Proton donor is Lys-168. 174-175 provides a ligand contact to (S)-2,3,4,5-tetrahydrodipicolinate; sequence GT.

The protein belongs to the DapB family.

It localises to the cytoplasm. The enzyme catalyses (S)-2,3,4,5-tetrahydrodipicolinate + NAD(+) + H2O = (2S,4S)-4-hydroxy-2,3,4,5-tetrahydrodipicolinate + NADH + H(+). It carries out the reaction (S)-2,3,4,5-tetrahydrodipicolinate + NADP(+) + H2O = (2S,4S)-4-hydroxy-2,3,4,5-tetrahydrodipicolinate + NADPH + H(+). It functions in the pathway amino-acid biosynthesis; L-lysine biosynthesis via DAP pathway; (S)-tetrahydrodipicolinate from L-aspartate: step 4/4. Catalyzes the conversion of 4-hydroxy-tetrahydrodipicolinate (HTPA) to tetrahydrodipicolinate. In Cyanothece sp. (strain PCC 7425 / ATCC 29141), this protein is 4-hydroxy-tetrahydrodipicolinate reductase.